The following is a 364-amino-acid chain: Solute carrier family 35 member C2 (364 aa).

The next 2 membrane-spanning stretches (helical) occupy residues 14–34 (AALT…ITFY) and 42–62 (FHFP…FSAL). Asn102 is a glycosylation site (N-linked (GlcNAc...) asparagine). 7 helical membrane passes run 104–124 (SFLY…VLFI), 136–156 (LRAA…MFTY), 166–186 (FALV…TQIL), 202–222 (FHLQ…FEGL), 238–258 (LLLW…GLGF), 272–292 (LSIA…HLLG), and 295–315 (ISLL…LHVA). Ser335 and Ser336 each carry phosphoserine.

Belongs to the TPT transporter family. SLC35C subfamily.

The protein resides in the golgi apparatus. It is found in the cis-Golgi network membrane. Its subcellular location is the endoplasmic reticulum-Golgi intermediate compartment membrane. In terms of biological role, may play an important role in the cellular response to tissue hypoxia. May be either a GDP-fucose transporter that competes with SLC35C1 for GDP-fucose, or a factor that otherwise enhances the fucosylation of Notch and is required for optimal Notch signaling in mammalian cells. The protein is Solute carrier family 35 member C2 (Slc35c2) of Mus musculus (Mouse).